A 147-amino-acid chain; its full sequence is Methylated-DNA--protein-cysteine methyltransferase (147 aa).

C112 (nucleophile; methyl group acceptor) is an active-site residue.

This sequence belongs to the MGMT family.

It is found in the cytoplasm. It catalyses the reaction a 6-O-methyl-2'-deoxyguanosine in DNA + L-cysteinyl-[protein] = S-methyl-L-cysteinyl-[protein] + a 2'-deoxyguanosine in DNA. The enzyme catalyses a 4-O-methyl-thymidine in DNA + L-cysteinyl-[protein] = a thymidine in DNA + S-methyl-L-cysteinyl-[protein]. In terms of biological role, involved in the cellular defense against the biological effects of O6-methylguanine (O6-MeG) and O4-methylthymine (O4-MeT) in DNA. Repairs the methylated nucleobase in DNA by stoichiometrically transferring the methyl group to a cysteine residue in the enzyme. This is a suicide reaction: the enzyme is irreversibly inactivated. The polypeptide is Methylated-DNA--protein-cysteine methyltransferase (Archaeoglobus fulgidus (strain ATCC 49558 / DSM 4304 / JCM 9628 / NBRC 100126 / VC-16)).